We begin with the raw amino-acid sequence, 103 residues long: Secreted LysM effector Mgx1LysM (103 aa).

The N-terminal stretch at methionine 1–alanine 18 is a signal peptide. Intrachain disulfides connect cysteine 31–cysteine 89 and cysteine 62–cysteine 97. Positions isoleucine 37 to isoleucine 85 constitute a LysM domain. Glycine 44, threonine 48, aspartate 75, and isoleucine 77 together coordinate chitin.

This sequence belongs to the secreted LysM effector family. In terms of assembly, forms homodimers in a chitin-independent manner through interactions at the N-termini of Mgx1LysM monomers. Homodimers are further polymerized in a chitin-dependent manner.

It localises to the secreted. The protein localises to the cell wall. Functionally, secreted effector that enables the plant pathogenic fungus to manipulate host defenses for successful infection. Binds chitin and suppresses the chitin-induced reactive oxygen species (ROS) burst. Chitin-induced polymerization of homodimers forms a contiguous Mg1LysM highly oligomeric super-complexe that is anchored to the chitin in the fungal cell wall to prevent hydrolysis by host chitinases. In Zymoseptoria tritici (strain CBS 115943 / IPO323) (Speckled leaf blotch fungus), this protein is Secreted LysM effector Mgx1LysM.